The sequence spans 424 residues: Histone-binding protein RBBP7 (424 aa).

WD repeat units lie at residues 47-121 (QWLP…KINH), 127-172 (RARY…LRLR), 180-216 (GLSW…KIVD), 227-268 (VVED…HSVD), 274-311 (VNCL…LHSF), 317-368 (EIFQ…LFIH), and 375-402 (ISDF…IWQM). The interval 359-404 (DGPPELLFIHGGHTAKISDFSWNPNEPWVICSVSEDNIMQIWQMAE) is interaction with HAT1.

The protein belongs to the WD repeat RBAP46/RBAP48/MSI1 family. As to quaternary structure, binds directly to helix 1 of the histone fold of histone H4, a region that is not accessible when H4 is in chromatin. Also interacts with histone H2B and HAT1.

It is found in the nucleus. Its function is as follows. Core histone-binding subunit that may target chromatin remodeling factors, histone acetyltransferases and histone deacetylases to their histone substrates in a manner that is regulated by nucleosomal DNA. Component of several complexes which regulate chromatin metabolism. The sequence is that of Histone-binding protein RBBP7 (RBBP7) from Gallus gallus (Chicken).